Consider the following 32-residue polypeptide: Photosystem II reaction center protein T (32 aa).

Residues 3–23 form a helical membrane-spanning segment; that stretch reads AFAYVLILTLAVVTLFFAVAF.

It belongs to the PsbT family. PSII is composed of 1 copy each of membrane proteins PsbA, PsbB, PsbC, PsbD, PsbE, PsbF, PsbH, PsbI, PsbJ, PsbK, PsbL, PsbM, PsbT, PsbX, PsbY, Psb30/Ycf12, peripheral proteins PsbO, CyanoQ (PsbQ), PsbU, PsbV and a large number of cofactors. It forms dimeric complexes.

Its subcellular location is the cellular thylakoid membrane. Its function is as follows. Found at the monomer-monomer interface of the photosystem II (PS II) dimer, plays a role in assembly and dimerization of PSII. PSII is a light-driven water plastoquinone oxidoreductase, using light energy to abstract electrons from H(2)O, generating a proton gradient subsequently used for ATP formation. This chain is Photosystem II reaction center protein T, found in Prochlorococcus marinus (strain MIT 9301).